The chain runs to 414 residues: WW domain-containing oxidoreductase (414 aa).

Positions 1–24 (MAALRYAGLDDTDSEDELPPGWEE) are disordered. Thr-12 bears the Phosphothreonine mark. The residue at position 14 (Ser-14) is a Phosphoserine. The region spanning 16-49 (DELPPGWEERTTKDGWVYYANHTEEKTQWEHPKT) is the WW 1 domain. A Phosphotyrosine modification is found at Tyr-33. Residues 50 to 55 (GKRKRV) carry the Nuclear localization signal motif. One can recognise a WW 2 domain in the interval 57-90 (GDLPYGWEQGTDENGQVFFVDHINKRTTYLDPRL). The tract at residues 125–414 (KVVVVTGANS…IQERLGSQSG (290 aa)) is interaction with MAPT. 131 to 137 (GANSGIG) is a binding site for NADP(+). The tract at residues 209–273 (CNAATFALPW…RFTDINDSLG (65 aa)) is mediates targeting to the mitochondria. Ser-260 lines the substrate pocket. Phosphotyrosine; by TNK2 is present on Tyr-287. The Proton acceptor role is filled by Tyr-293.

It belongs to the short-chain dehydrogenases/reductases (SDR) family. As to quaternary structure, interacts with TP53, p73/TP73 and MAPK8. Interacts with MAPT/TAU, RUNX2 and HYAL2. Forms a ternary complex with TP53 and MDM2. Interacts with ERBB4, LITAF and WBP1. Interacts with DVL1, DVL2 and DVL3. May interact with FAM189B and SCOTIN. Interacts with TNK2. Interacts with TMEM207. Interacts (via WW domain) with VOPP1. In terms of processing, phosphorylated upon genotoxic stress. Phosphorylation of Tyr-33 regulates interaction with TP53, TP73 and MAPK8. May also regulate proapoptotic activity. Phosphorylation by TNK2 is associated with polyubiquitination and degradation. Post-translationally, ubiquitinated when phosphorylated by TNK2, leading to its degradation.

It is found in the cytoplasm. The protein resides in the nucleus. The protein localises to the mitochondrion. It localises to the golgi apparatus. Its subcellular location is the lysosome. Putative oxidoreductase. Acts as a tumor suppressor and plays a role in apoptosis. May function synergistically with p53/TP53 to control genotoxic stress-induced cell death. Plays a role in TGFB1 signaling and TGFB1-mediated cell death. May also play a role in tumor necrosis factor (TNF)-mediated cell death. Required for normal bone development. Inhibits Wnt signaling, probably by sequestering DVL2 in the cytoplasm. The protein is WW domain-containing oxidoreductase (WWOX) of Pongo abelii (Sumatran orangutan).